The chain runs to 140 residues: Inner membrane protein YphA (140 aa).

Topologically, residues 1–13 (MNTLRYFDFGAAR) are cytoplasmic. The helical transmembrane segment at 14–34 (PVLLLIARIAVVLIFIIFGFP) threads the bilayer. Residues 35–56 (KMMGFDGTVQYMASLGAPMPML) lie on the Periplasmic side of the membrane. A helical transmembrane segment spans residues 57 to 77 (AAIIAVVMEVPAAILIVLGFF). Topologically, residues 78-79 (TR) are cytoplasmic. Residues 80–100 (PLAVLFIFYTLGTAVIGHHYW) traverse the membrane as a helical segment. The Periplasmic portion of the chain corresponds to 101-116 (DMTGDAVGPNMINFWK). A helical transmembrane segment spans residues 117–137 (NVSIAGAFLLLAITGPGAISL). The Cytoplasmic segment spans residues 138–140 (DRR).

This sequence belongs to the DoxX family.

The protein resides in the cell inner membrane. The polypeptide is Inner membrane protein YphA (yphA) (Escherichia coli (strain K12)).